The sequence spans 257 residues: Imidazole glycerol phosphate synthase subunit HisF (257 aa).

Residues Asp-11 and Asp-130 contribute to the active site.

The protein belongs to the HisA/HisF family. Heterodimer of HisH and HisF.

The protein localises to the cytoplasm. It catalyses the reaction 5-[(5-phospho-1-deoxy-D-ribulos-1-ylimino)methylamino]-1-(5-phospho-beta-D-ribosyl)imidazole-4-carboxamide + L-glutamine = D-erythro-1-(imidazol-4-yl)glycerol 3-phosphate + 5-amino-1-(5-phospho-beta-D-ribosyl)imidazole-4-carboxamide + L-glutamate + H(+). It functions in the pathway amino-acid biosynthesis; L-histidine biosynthesis; L-histidine from 5-phospho-alpha-D-ribose 1-diphosphate: step 5/9. In terms of biological role, IGPS catalyzes the conversion of PRFAR and glutamine to IGP, AICAR and glutamate. The HisF subunit catalyzes the cyclization activity that produces IGP and AICAR from PRFAR using the ammonia provided by the HisH subunit. The sequence is that of Imidazole glycerol phosphate synthase subunit HisF from Vibrio campbellii (strain ATCC BAA-1116).